The primary structure comprises 276 residues: Bifunctional protein FolD (276 aa).

Residues N157–S159, S182, and I223 contribute to the NADP(+) site.

It belongs to the tetrahydrofolate dehydrogenase/cyclohydrolase family. As to quaternary structure, homodimer.

It carries out the reaction (6R)-5,10-methylene-5,6,7,8-tetrahydrofolate + NADP(+) = (6R)-5,10-methenyltetrahydrofolate + NADPH. The enzyme catalyses (6R)-5,10-methenyltetrahydrofolate + H2O = (6R)-10-formyltetrahydrofolate + H(+). The protein operates within one-carbon metabolism; tetrahydrofolate interconversion. In terms of biological role, catalyzes the oxidation of 5,10-methylenetetrahydrofolate to 5,10-methenyltetrahydrofolate and then the hydrolysis of 5,10-methenyltetrahydrofolate to 10-formyltetrahydrofolate. The protein is Bifunctional protein FolD of Thermoplasma acidophilum (strain ATCC 25905 / DSM 1728 / JCM 9062 / NBRC 15155 / AMRC-C165).